Here is a 298-residue protein sequence, read N- to C-terminus: Troponin T, cardiac muscle (298 aa).

Residues 1–70 (MSDIEEVVEE…EAKEAEDGPM (70 aa)) are compositionally biased toward acidic residues. 2 disordered regions span residues 1-95 (MSDI…GERV) and 120-219 (FENR…EKKK). Serine 2 bears the N-acetylserine mark. Serine 2 bears the Phosphoserine; by CK2 mark. 2 stretches are compositionally biased toward basic and acidic residues: residues 120 to 183 (FENR…DEAR) and 203 to 219 (QTER…EKKK). Threonine 204 is modified (phosphothreonine; by PKC/PRKCA). Serine 208 is modified (phosphoserine; by PKC/PRKCA). Threonine 213 carries the phosphothreonine; by PKC/PRKCA and RAF1 modification. A Phosphothreonine; by PKC/PRKCA modification is found at threonine 294.

The protein belongs to the troponin T family. Post-translationally, phosphorylation at Thr-213 by PRKCA induces significant reduction in myofilament calcium sensitivity and actomyosin ATPase activity. Heart. The fetal heart shows a greater expression in the atrium than in the ventricle, while the adult heart shows a greater expression in the ventricle than in the atrium. Isoform 6 predominates in normal adult heart. Isoforms 1, 7 and 8 are expressed in fetal heart. Isoform 7 is also expressed in failing adult heart.

Troponin T is the tropomyosin-binding subunit of troponin, the thin filament regulatory complex which confers calcium-sensitivity to striated muscle actomyosin ATPase activity. The protein is Troponin T, cardiac muscle (TNNT2) of Homo sapiens (Human).